Reading from the N-terminus, the 162-residue chain is NADH-quinone oxidoreductase subunit I (162 aa).

2 4Fe-4S ferredoxin-type domains span residues 53–83 and 93–122; these read LRRY…IDSE and TRYD…ETRI. [4Fe-4S] cluster is bound by residues Cys63, Cys66, Cys69, Cys73, Cys102, Cys105, Cys108, and Cys112.

It belongs to the complex I 23 kDa subunit family. In terms of assembly, NDH-1 is composed of 14 different subunits. Subunits NuoA, H, J, K, L, M, N constitute the membrane sector of the complex. It depends on [4Fe-4S] cluster as a cofactor.

The protein localises to the cell inner membrane. The enzyme catalyses a quinone + NADH + 5 H(+)(in) = a quinol + NAD(+) + 4 H(+)(out). Its function is as follows. NDH-1 shuttles electrons from NADH, via FMN and iron-sulfur (Fe-S) centers, to quinones in the respiratory chain. The immediate electron acceptor for the enzyme in this species is believed to be ubiquinone. Couples the redox reaction to proton translocation (for every two electrons transferred, four hydrogen ions are translocated across the cytoplasmic membrane), and thus conserves the redox energy in a proton gradient. This chain is NADH-quinone oxidoreductase subunit I, found in Thiobacillus denitrificans (strain ATCC 25259 / T1).